The sequence spans 156 residues: Snaclec A11 (156 aa).

Residues 1 to 23 (MGRSISVSFGLLVVFLSLSGTGA) form the signal peptide. Disulfide bonds link C27–C38, C55–C154, and C129–C146. In terms of domain architecture, C-type lectin spans 34 to 155 (YDQHCYQAVD…CGQPYRFTCE (122 aa)).

This sequence belongs to the snaclec family. Heterodimer; disulfide-linked. Expressed by the venom gland.

The protein localises to the secreted. Functionally, interferes with one step of hemostasis (modulation of platelet aggregation, or coagulation cascade, for example). The chain is Snaclec A11 from Macrovipera lebetinus (Levantine viper).